A 140-amino-acid chain; its full sequence is MAIERTLSIIKPDATRRNLTGKINAKFEDAGLRIVAQKRIHLSLAQAQKFYGVHKDRPFFGELTEFMASEPVVVQVLEGEGAIAKNREVMGATNPANADEGTIRKEFALSVGENSVHGSDAPETAAEEIAFFFSGLELVG.

K11, F59, R87, T93, R104, and N114 together coordinate ATP. The Pros-phosphohistidine intermediate role is filled by H117.

The protein belongs to the NDK family. Homotetramer. Requires Mg(2+) as cofactor.

It is found in the cytoplasm. It catalyses the reaction a 2'-deoxyribonucleoside 5'-diphosphate + ATP = a 2'-deoxyribonucleoside 5'-triphosphate + ADP. It carries out the reaction a ribonucleoside 5'-diphosphate + ATP = a ribonucleoside 5'-triphosphate + ADP. Its function is as follows. Major role in the synthesis of nucleoside triphosphates other than ATP. The ATP gamma phosphate is transferred to the NDP beta phosphate via a ping-pong mechanism, using a phosphorylated active-site intermediate. In Cereibacter sphaeroides (strain ATCC 17025 / ATH 2.4.3) (Rhodobacter sphaeroides), this protein is Nucleoside diphosphate kinase.